We begin with the raw amino-acid sequence, 297 residues long: tRNA dimethylallyltransferase (297 aa).

9-16 (GPTASGKS) serves as a coordination point for ATP. Substrate is bound at residue 11 to 16 (TASGKS). Interaction with substrate tRNA stretches follow at residues 34-37 (DSMQ) and 155-159 (QRVIR).

Belongs to the IPP transferase family. As to quaternary structure, monomer. Mg(2+) is required as a cofactor.

It carries out the reaction adenosine(37) in tRNA + dimethylallyl diphosphate = N(6)-dimethylallyladenosine(37) in tRNA + diphosphate. Its function is as follows. Catalyzes the transfer of a dimethylallyl group onto the adenine at position 37 in tRNAs that read codons beginning with uridine, leading to the formation of N6-(dimethylallyl)adenosine (i(6)A). This chain is tRNA dimethylallyltransferase, found in Leuconostoc mesenteroides subsp. mesenteroides (strain ATCC 8293 / DSM 20343 / BCRC 11652 / CCM 1803 / JCM 6124 / NCDO 523 / NBRC 100496 / NCIMB 8023 / NCTC 12954 / NRRL B-1118 / 37Y).